The chain runs to 630 residues: PR domain zinc finger protein 5 (630 aa).

Positions 8–124 constitute an SET domain; that stretch reads DRFSLKSSRV…TDTELLIGYL (117 aa). Residues 167–190 form a C2H2-type 1 zinc finger; the sequence is YACPQCESSFTSEDILAEHLQTLH. The C2H2-type 2; atypical zinc finger occupies 199–221; sequence FKCKNCGKKFPVKQALQRHVLQC. The segment at 234–256 adopts a C2H2-type 3; atypical zinc-finger fold; that stretch reads FQCSVCNSSFSSASSFEQHQETC. 13 consecutive C2H2-type zinc fingers follow at residues 262–287, 295–317, 320–342, 348–370, 376–398, 404–426, 432–455, 461–483, 489–511, 517–539, 545–567, 573–595, and 602–625; these read FVCKADSCGKRLKSKDALKRHQENVH, LICSVCNKKCSSASSLQEHRKIH, FDCQECMKKFISANQLKRHMITH, YNCEICNKSFKRLDQVGAHKVIH, YKCKLCGKGFAHRNVYKNHKKTH, FQCEECKALFRTPFSLQRHLLIH, FKCHHCDATFKRKDTLNVHVQVVH, YRCELCNKAFVTPSVLRSHKKTH, KICPYCGQKFASSGTLRVHIRSH, YQCPYCEKGFSKNDGLKMHIRTH, YKCSECSKAFSQKRGLDEHKRTH, FQCDVCDLAFSLKKMLIRHKMTH, and AECQFCHKKFTRNDYLKVHMDNIH.

It belongs to the class V-like SAM-binding methyltransferase superfamily. In terms of assembly, interacts with EHMT2/G9A, GFI1 and HDAC1. In terms of tissue distribution, widely expressed with highest levels in colon and ovary. Tends to be silenced in breast, colorectal, gastric and liver cancer tissues.

Its subcellular location is the nucleus. Sequence-specific DNA-binding transcription factor. Represses transcription at least in part by recruitment of the histone methyltransferase EHMT2/G9A and histone deacetylases such as HDAC1. Regulates hematopoiesis-associated protein-coding and microRNA (miRNA) genes. May regulate the expression of proteins involved in extracellular matrix development and maintenance, including fibrillar collagens, such as COL4A1 and COL11A1, connective tissue components, such as HAPLN1, and molecules regulating cell migration and adhesion, including EDIL3 and TGFB2. May cause G2/M arrest and apoptosis in cancer cells. In Homo sapiens (Human), this protein is PR domain zinc finger protein 5 (PRDM5).